A 194-amino-acid chain; its full sequence is INO80 complex subunit 4 (194 aa).

2 disordered regions span residues 24 to 107 (KEKQ…NSGL) and 170 to 194 (STHA…ATGI). 2 stretches are compositionally biased toward polar residues: residues 28–38 (NFTASPSSQPK) and 82–97 (SKPS…SAPK). S86 carries the post-translational modification Phosphoserine. Phosphothreonine is present on T90.

Component of the INO80 chromatin remodeling complex.

The protein resides in the cytoplasm. The protein localises to the nucleus. Component of the INO80 complex which remodels chromatin by shifting nucleosomes and is involved in DNA repair. The polypeptide is INO80 complex subunit 4 (ies4) (Schizosaccharomyces pombe (strain 972 / ATCC 24843) (Fission yeast)).